The following is a 75-amino-acid chain: Antitoxin MT0312 (75 aa).

Its function is as follows. Antitoxin component of a type II toxin-antitoxin (TA) system. This Mycobacterium tuberculosis (strain CDC 1551 / Oshkosh) protein is Antitoxin MT0312.